A 2059-amino-acid chain; its full sequence is DNA polymerase theta (2059 aa).

Residues 25–45 (DKENAQPGNGNIQVQSAGNEV) form a disordered region. Polar residues predominate over residues 30-45 (QPGNGNIQVQSAGNEV). A Helicase ATP-binding domain is found at 243 to 416 (PRLLFEHCNL…WLDAELYITN (174 aa)). 256–263 (APTSAGKT) contributes to the ATP binding site. A DEAH box motif is present at residues 357 to 360 (DEVH). Residues 464-666 (CIETLLEGCS…HLKRALLEVI (203 aa)) form the Helicase C-terminal domain. 4 disordered regions span residues 1052–1073 (PPVK…KNPR), 1168–1190 (PQLA…VNEG), 1204–1274 (QRTQ…SRKV), and 1330–1372 (PHAS…GVSS). Positions 1062–1071 (ENGTANSQKN) are enriched in polar residues. Over residues 1213 to 1274 (KDQPIQASRS…NANRTASRKV (62 aa)) the composition is skewed to polar residues. The segment covering 1355–1365 (REIEIDLESKN) has biased composition (basic and acidic residues).

The protein belongs to the DNA polymerase type-A family. Requires Mg(2+) as cofactor. In adult males, cleaved to produce a 100 kDa form. In terms of tissue distribution, expressed in ovaries (at protein level).

It is found in the nucleus. It catalyses the reaction DNA(n) + a 2'-deoxyribonucleoside 5'-triphosphate = DNA(n+1) + diphosphate. Its activity is regulated as follows. Resistant to aphidicolin, but sensitive to dideoxythymindine triphosphate (ddTTP) and N-ethyl malemide (NEM). Functionally, multifunctional protein with both DNA polymerase and ATPase activities. Might have 3' to 5' exonuclease activity. Plays a role in different DNA repair pathways such as DNA strand cross-link repair and microhomology-mediated end-joining (MMEJ), an alternative non-homologous end-joining (NHEJ) machinery triggered in response to double-strand breaks. MMEJ is an error-prone repair pathway that produces deletions of sequences from the strand being repaired and promotes genomic rearrangements, such as telomere fusions. Utilizes short microhomologies present in partially and fully single-stranded DNA (ssDNA) as primers for DNA synthesis. Prefers poly(dA)/oligo(dT) as a template-primer. The ATPase activity is necessary during interstrand cross-link (ICL) repair and has a critical role in generating templated insertions during MMEJ. Necessary for processing DNA damage induced by oxygen and N-ethylation. In follicle cells, contributes to double-strand break repair at physiological rereplication forks necessary for survival of fertilized eggs. The protein is DNA polymerase theta of Drosophila melanogaster (Fruit fly).